Reading from the N-terminus, the 861-residue chain is DNA mismatch repair protein MutS (861 aa).

616-623 serves as a coordination point for ATP; it reads GPNMGGKS.

Belongs to the DNA mismatch repair MutS family.

Its function is as follows. This protein is involved in the repair of mismatches in DNA. It is possible that it carries out the mismatch recognition step. This protein has a weak ATPase activity. The protein is DNA mismatch repair protein MutS of Haemophilus influenzae (strain PittEE).